A 370-amino-acid polypeptide reads, in one-letter code: MSHASPAAKPSNSKNPRVFFDVDIGGERVGRIVLELFADIVPKTAENFRALCTGEKGTGSTTGKPLHFKGCPFHRIIKKFMIQGGDFSNQNGTGGESIYGEKFEDENFHYKHDREGLLSMANAGPNTNGSQFFITTVPTPHLDGKHVVFGQVIKGLGVARTLENVEVNGEKPAKLCVIAECGELKEGDDWGIFPKDGSGDSHPDFPEDADIDLKDVDKILLISEDLKNIGNTFFKSQNWEMAIKKYAKVLRYVDSSKAVIEKADRSRLQPIALSCVLNIGACKLKMSNWQGAIDSCLEALEMDPSNTKALYRKAQGWQGLKEYDQALADLKKAQEIAPGDKAIQAELLKVKQMIKAQKDKEKAVYAKMFA.

A Phosphoserine modification is found at S5. Residues 19–183 (FFDVDIGGER…KLCVIAECGE (165 aa)) form the PPIase cyclophilin-type domain. An N6-acetyllysine modification is found at K171. The chaperone activity stretch occupies residues 185 to 215 (KEGDDWGIFPKDGSGDSHPDFPEDADIDLKD). At S198 the chain carries Phosphoserine. Positions 214–370 (KDVDKILLIS…EKAVYAKMFA (157 aa)) are interaction with HSP90AB1. TPR repeat units follow at residues 223–256 (SEDL…VDSS), 273–306 (LSCV…DPSN), and 307–340 (TKAL…APGD).

Belongs to the cyclophilin-type PPIase family. PPIase D subfamily. In terms of assembly, identified in ESR1 or NR3C1/GCR steroid receptor-chaperone complexes. Found in HSP90 chaperone complexes with kinase clients LCK or EIF2AK1. Two monomers associate with one HSP90 homodimer. Interacts with HSP90AA1. Interacts with HSP90AB1; PPID and FKBP4 compete for binding to HSP90AB1 and the interaction is mutually exclusive with the PPID:HSPA8 interaction. Interacts with HSPA8; PPID and STIP1 but not FKBP4 compete for binding to HSPA8 and the interaction is mutually exclusive with the PPID:HSP90AB1 interaction. Interacts with S100A1 and S100A2; the interactions dissociate the PPID:HSP90AA1 interaction. Interacts with S100A6. Interacts with MYB, ILF2, XRCC6, RACK1 and RPS3. Interacts with cytoplasmic dynein 1 intermediate chain (DYNC1I1 or DYNC1I2).

The protein resides in the cytoplasm. The protein localises to the nucleus. It is found in the nucleolus. It localises to the nucleoplasm. It catalyses the reaction [protein]-peptidylproline (omega=180) = [protein]-peptidylproline (omega=0). Its activity is regulated as follows. Less sensitive to inhibition by cyclosporin A than is CYP-18. In terms of biological role, PPIase that catalyzes the cis-trans isomerization of proline imidic peptide bonds in oligopeptides and may therefore assist protein folding. Proposed to act as a co-chaperone in HSP90 complexes such as in unligated steroid receptors heterocomplexes. Different co-chaperones seem to compete for association with HSP90 thus establishing distinct HSP90-co-chaperone-receptor complexes with the potential to exert tissue-specific receptor activity control. May have a preference for estrogen receptor complexes and is not found in glucocorticoid receptor complexes. May be involved in cytoplasmic dynein-dependent movement of the receptor from the cytoplasm to the nucleus. May regulate MYB by inhibiting its DNA-binding activity. Involved in regulation of AHR signaling by promoting the formation of the AHR:ARNT dimer; the function is independent of HSP90 but requires the chaperone activity region. Involved in regulation of UV radiation-induced apoptosis. The chain is Peptidyl-prolyl cis-trans isomerase D from Mus musculus (Mouse).